Reading from the N-terminus, the 508-residue chain is GMP synthase [glutamine-hydrolyzing] (508 aa).

In terms of domain architecture, Glutamine amidotransferase type-1 spans 1 to 189 (MIVVLDFGSQ…ALLVCGCEKT (189 aa)). The Nucleophile role is filled by C78. Active-site residues include H163 and E165. The GMPS ATP-PPase domain maps to 190-383 (WGMQNFAQKE…LGVSQDFLMR (194 aa)). 217–223 (SGGVDST) contributes to the ATP binding site.

In terms of assembly, homodimer.

It carries out the reaction XMP + L-glutamine + ATP + H2O = GMP + L-glutamate + AMP + diphosphate + 2 H(+). It participates in purine metabolism; GMP biosynthesis; GMP from XMP (L-Gln route): step 1/1. In terms of biological role, catalyzes the synthesis of GMP from XMP. The protein is GMP synthase [glutamine-hydrolyzing] of Helicobacter acinonychis (strain Sheeba).